The primary structure comprises 267 residues: MKATVLTLAVLFLTGSQARHFWQQDEPPQTPWDRVKDLVTVYVEALKDSGKDYVSQFEGSALGKQLNLKLLDNWDSVTSTVSKLREQLGPVTQEFWDNLEKETEGLRQEMSKDLEEVKAKVQPYLDDFQKKWQEEMELYRQKVEPLRAELHEGTRQKLHELHEKLSPLGEEVRDRARAHVDALRTHLAPYSDELRQRLAARLEALKENGGARLAEYHAKASEHLSTLSEKAKPALEDLRQGLLPVLESFKVSFLSALEEYTKKLSTQ.

The signal sequence occupies residues 1-18 (MKATVLTLAVLFLTGSQA). Repeat copies occupy residues 68-89 (LKLL…EQLG) and 90-111 (PVTQ…QEMS). Residues 68 to 267 (LKLLDNWDSV…EEYTKKLSTQ (200 aa)) are 10 X approximate tandem repeats. A Methionine sulfoxide modification is found at Met110. The 3; half-length repeat unit spans residues 112–122 (KDLEEVKAKVQ). Repeat copies occupy residues 123–144 (PYLD…QKVE), 145–166 (PLRA…EKLS), 167–188 (PLGE…THLA), 189–210 (PYSD…ENGG), and 211–232 (ARLA…EKAK). The residue at position 136 (Met136) is a Methionine sulfoxide. Residues 233–243 (PALEDLRQGLL) form a 9; half-length repeat. The stretch at 244 to 267 (PVLESFKVSFLSALEEYTKKLSTQ) is repeat 10.

Belongs to the apolipoprotein A1/A4/E family. As to quaternary structure, homodimer. Interacts with APOA1BP and CLU. Component of a sperm activating protein complex (SPAP), consisting of APOA1, an immunoglobulin heavy chain, an immunoglobulin light chain and albumin. Interacts with NDRG1. Interacts with SCGB3A2. Interacts with NAXE and YJEFN3. In terms of processing, glycosylated. Post-translationally, palmitoylated. Phosphorylation sites are present in the extracellular medium. Major protein of plasma HDL, also found in chylomicrons.

Its subcellular location is the secreted. Participates in the reverse transport of cholesterol from tissues to the liver for excretion by promoting cholesterol efflux from tissues and by acting as a cofactor for the lecithin cholesterol acyltransferase (LCAT). As part of the SPAP complex, activates spermatozoa motility. This Papio hamadryas (Hamadryas baboon) protein is Apolipoprotein A-I (APOA1).